The primary structure comprises 188 residues: dCTP deaminase (188 aa).

107-112 (KSTYAR) lines the dCTP pocket. The active-site Proton donor/acceptor is E133. DCTP-binding residues include Q152, Y166, and Q176.

This sequence belongs to the dCTP deaminase family. As to quaternary structure, homotrimer.

It catalyses the reaction dCTP + H2O + H(+) = dUTP + NH4(+). Its pathway is pyrimidine metabolism; dUMP biosynthesis; dUMP from dCTP (dUTP route): step 1/2. Catalyzes the deamination of dCTP to dUTP. The protein is dCTP deaminase of Sulfurovum sp. (strain NBC37-1).